A 560-amino-acid chain; its full sequence is Light-independent protochlorophyllide reductase subunit N (560 aa).

3 residues coordinate [4Fe-4S] cluster: cysteine 24, cysteine 49, and cysteine 109. Low complexity predominate over residues 173–182 (NSLFNQSSNS). Residues 173–210 (NSLFNQSSNSPENLKTLNTKKDTFQNSTENSKTFSAEK) form a disordered region. A compositionally biased stretch (polar residues) spans 196–206 (FQNSTENSKTF).

It belongs to the BchN/ChlN family. In terms of assembly, protochlorophyllide reductase is composed of three subunits; ChlL, ChlN and ChlB. Forms a heterotetramer of two ChlB and two ChlN subunits. [4Fe-4S] cluster serves as cofactor.

Its subcellular location is the plastid. The protein resides in the chloroplast. It carries out the reaction chlorophyllide a + oxidized 2[4Fe-4S]-[ferredoxin] + 2 ADP + 2 phosphate = protochlorophyllide a + reduced 2[4Fe-4S]-[ferredoxin] + 2 ATP + 2 H2O. It participates in porphyrin-containing compound metabolism; chlorophyll biosynthesis (light-independent). In terms of biological role, component of the dark-operative protochlorophyllide reductase (DPOR) that uses Mg-ATP and reduced ferredoxin to reduce ring D of protochlorophyllide (Pchlide) to form chlorophyllide a (Chlide). This reaction is light-independent. The NB-protein (ChlN-ChlB) is the catalytic component of the complex. This is Light-independent protochlorophyllide reductase subunit N from Tetradesmus obliquus (Green alga).